Consider the following 453-residue polypeptide: Bifunctional protein GlmU (453 aa).

The segment at 1–227 is pyrophosphorylase; it reads MTQLSVVILA…LMEVEGANNR (227 aa). Residues 9 to 12, K23, Q74, 79 to 80, 101 to 103, G138, E152, N167, and N225 each bind UDP-N-acetyl-alpha-D-glucosamine; these read LAAG, GT, and YGD. Position 103 (D103) interacts with Mg(2+). N225 contacts Mg(2+). The interval 228 to 248 is linker; that stretch reads LQLAALERYYQKIQAEKLLLA. The segment at 249–453 is N-acetyltransferase; sequence GVTIIDPARF…IQGWQRPTKK (205 aa). UDP-N-acetyl-alpha-D-glucosamine is bound by residues R331 and K349. H361 acts as the Proton acceptor in catalysis. UDP-N-acetyl-alpha-D-glucosamine-binding residues include Y364 and N375. Acetyl-CoA-binding positions include A378, 384-385, S403, A421, and R438; that span reads NY.

The protein in the N-terminal section; belongs to the N-acetylglucosamine-1-phosphate uridyltransferase family. It in the C-terminal section; belongs to the transferase hexapeptide repeat family. In terms of assembly, homotrimer. Requires Mg(2+) as cofactor.

The protein localises to the cytoplasm. The enzyme catalyses alpha-D-glucosamine 1-phosphate + acetyl-CoA = N-acetyl-alpha-D-glucosamine 1-phosphate + CoA + H(+). It catalyses the reaction N-acetyl-alpha-D-glucosamine 1-phosphate + UTP + H(+) = UDP-N-acetyl-alpha-D-glucosamine + diphosphate. It functions in the pathway nucleotide-sugar biosynthesis; UDP-N-acetyl-alpha-D-glucosamine biosynthesis; N-acetyl-alpha-D-glucosamine 1-phosphate from alpha-D-glucosamine 6-phosphate (route II): step 2/2. The protein operates within nucleotide-sugar biosynthesis; UDP-N-acetyl-alpha-D-glucosamine biosynthesis; UDP-N-acetyl-alpha-D-glucosamine from N-acetyl-alpha-D-glucosamine 1-phosphate: step 1/1. It participates in bacterial outer membrane biogenesis; LPS lipid A biosynthesis. Catalyzes the last two sequential reactions in the de novo biosynthetic pathway for UDP-N-acetylglucosamine (UDP-GlcNAc). The C-terminal domain catalyzes the transfer of acetyl group from acetyl coenzyme A to glucosamine-1-phosphate (GlcN-1-P) to produce N-acetylglucosamine-1-phosphate (GlcNAc-1-P), which is converted into UDP-GlcNAc by the transfer of uridine 5-monophosphate (from uridine 5-triphosphate), a reaction catalyzed by the N-terminal domain. The protein is Bifunctional protein GlmU of Glaesserella parasuis serovar 5 (strain SH0165) (Haemophilus parasuis).